The primary structure comprises 514 residues: Peptide chain release factor 3 (514 aa).

The 261-residue stretch at 8–268 (KKRRTFAIIS…IFLKFAPEPH (261 aa)) folds into the tr-type G domain. GTP contacts are provided by residues 17–24 (SHPDAGKT), 85–89 (DTPGH), and 139–142 (NKLD).

This sequence belongs to the TRAFAC class translation factor GTPase superfamily. Classic translation factor GTPase family. PrfC subfamily.

It is found in the cytoplasm. Its function is as follows. Increases the formation of ribosomal termination complexes and stimulates activities of RF-1 and RF-2. It binds guanine nucleotides and has strong preference for UGA stop codons. It may interact directly with the ribosome. The stimulation of RF-1 and RF-2 is significantly reduced by GTP and GDP, but not by GMP. This Streptococcus pneumoniae (strain P1031) protein is Peptide chain release factor 3.